We begin with the raw amino-acid sequence, 242 residues long: Small ribosomal subunit protein uS2 (242 aa).

It belongs to the universal ribosomal protein uS2 family.

The polypeptide is Small ribosomal subunit protein uS2 (Neisseria gonorrhoeae (strain ATCC 700825 / FA 1090)).